The chain runs to 129 residues: Small ribosomal subunit protein uS11 (129 aa).

It belongs to the universal ribosomal protein uS11 family. Part of the 30S ribosomal subunit. Interacts with proteins S7 and S18. Binds to IF-3.

Its function is as follows. Located on the platform of the 30S subunit, it bridges several disparate RNA helices of the 16S rRNA. Forms part of the Shine-Dalgarno cleft in the 70S ribosome. This is Small ribosomal subunit protein uS11 from Geobacillus sp. (strain WCH70).